A 345-amino-acid chain; its full sequence is Ubiquinone biosynthesis O-methyltransferase, mitochondrial (345 aa).

Residues 1–86 (MWRGGRLSSR…TYRSSWKKLY (86 aa)) constitute a mitochondrion transit peptide. Arg124 contributes to the S-adenosyl-L-methionine binding site. An N6-acetyllysine mark is found at Lys143 and Lys149. S-adenosyl-L-methionine-binding residues include Gly154 and Asp175. Lys196 carries the N6-acetyllysine modification. Ser222 provides a ligand contact to S-adenosyl-L-methionine. Mg(2+) is bound by residues Glu223, Glu226, and His227.

The protein belongs to the class I-like SAM-binding methyltransferase superfamily. UbiG/COQ3 family. In terms of assembly, component of a multi-subunit COQ enzyme complex, composed of at least COQ3, COQ4, COQ5, COQ6, COQ7 and COQ9. Mg(2+) is required as a cofactor.

The protein localises to the mitochondrion inner membrane. The catalysed reaction is 3,4-dihydroxy-5-(all-trans-decaprenyl)benzoate + S-adenosyl-L-methionine = 4-hydroxy-3-methoxy-5-(all-trans-decaprenyl)benzoate + S-adenosyl-L-homocysteine + H(+). The enzyme catalyses a 3-demethylubiquinone + S-adenosyl-L-methionine = a ubiquinone + S-adenosyl-L-homocysteine. It carries out the reaction 3-demethylubiquinol-10 + S-adenosyl-L-methionine = ubiquinol-10 + S-adenosyl-L-homocysteine + H(+). Its pathway is cofactor biosynthesis; ubiquinone biosynthesis. In terms of biological role, O-methyltransferase required for two non-consecutive steps during ubiquinone biosynthesis. Catalyzes the 2 O-methylation of 3,4-dihydroxy-5-(all-trans-decaprenyl)benzoic acid into 4-hydroxy-3-methoxy-5-(all-trans-decaprenyl)benzoic acid. Also catalyzes the last step of ubiquinone biosynthesis by mediating methylation of 3-demethylubiquinone into ubiquinone. Also able to mediate the methylation of 3-demethylubiquinol-10 into ubiquinol-10. The protein is Ubiquinone biosynthesis O-methyltransferase, mitochondrial of Rattus norvegicus (Rat).